The chain runs to 159 residues: UPF0262 protein Dshi_0980 (159 aa).

Belongs to the UPF0262 family.

This is UPF0262 protein Dshi_0980 from Dinoroseobacter shibae (strain DSM 16493 / NCIMB 14021 / DFL 12).